Reading from the N-terminus, the 207-residue chain is Ciliary microtubule-associated protein 3 (207 aa).

In terms of assembly, interacts with proteins involved in ciliary transport, including ARL13B, CETN1, KIF3A, RAB6A, RAB8A, TUBB1 and TUBG1. Interacts with AURKA. Expressed in tissues rich in ciliated cells, such as lung, kidney, vas deferens and testis. Both isoforms 1 and 2 are expressed in testis.

Its subcellular location is the golgi apparatus. The protein resides in the golgi stack. The protein localises to the trans-Golgi network. It is found in the nucleus. It localises to the cytoplasm. Its subcellular location is the cytoplasmic vesicle. During primary cilia disassembly, involved in cilia disassembly. Required specifically to control cilia retraction as well as the liberation and duplication of the basal body/centrosome. May act by stimulating AURKA activity at the basal body in a cell cycle-dependent manner. The polypeptide is Ciliary microtubule-associated protein 3 (Cimap3) (Mus musculus (Mouse)).